A 335-amino-acid polypeptide reads, in one-letter code: Acetyl-coenzyme A carboxylase carboxyl transferase subunit alpha (335 aa).

The region spanning 48–308 is the CoA carboxyltransferase C-terminal domain; that stretch reads TLEKKVEALR…KGILIEELSA (261 aa).

The protein belongs to the AccA family. As to quaternary structure, acetyl-CoA carboxylase is a heterohexamer composed of biotin carboxyl carrier protein (AccB), biotin carboxylase (AccC) and two subunits each of ACCase subunit alpha (AccA) and ACCase subunit beta (AccD).

It is found in the cytoplasm. It catalyses the reaction N(6)-carboxybiotinyl-L-lysyl-[protein] + acetyl-CoA = N(6)-biotinyl-L-lysyl-[protein] + malonyl-CoA. It functions in the pathway lipid metabolism; malonyl-CoA biosynthesis; malonyl-CoA from acetyl-CoA: step 1/1. Its function is as follows. Component of the acetyl coenzyme A carboxylase (ACC) complex. First, biotin carboxylase catalyzes the carboxylation of biotin on its carrier protein (BCCP) and then the CO(2) group is transferred by the carboxyltransferase to acetyl-CoA to form malonyl-CoA. This chain is Acetyl-coenzyme A carboxylase carboxyl transferase subunit alpha, found in Chlorobium phaeovibrioides (strain DSM 265 / 1930) (Prosthecochloris vibrioformis (strain DSM 265)).